Reading from the N-terminus, the 119-residue chain is Large ribosomal subunit protein bL20 (119 aa).

It belongs to the bacterial ribosomal protein bL20 family.

Functionally, binds directly to 23S ribosomal RNA and is necessary for the in vitro assembly process of the 50S ribosomal subunit. It is not involved in the protein synthesizing functions of that subunit. The protein is Large ribosomal subunit protein bL20 of Dehalococcoides mccartyi (strain ATCC BAA-2266 / KCTC 15142 / 195) (Dehalococcoides ethenogenes (strain 195)).